Here is a 388-residue protein sequence, read N- to C-terminus: Glucose-6-phosphate/phosphate translocator 1, chloroplastic (388 aa).

Residues M1–C65 constitute a chloroplast transit peptide. The next 8 membrane-spanning stretches (helical) occupy residues L95–N115, S129–V149, F158–V178, F211–L231, E233–F253, Y273–G293, L305–L325, and T363–Y383. Residues N112–S229 form the EamA domain.

This sequence belongs to the TPT transporter family. GPT (TC 2.A.7.9) subfamily. Expressed in seeds, flowers, rosette leaves, and roots, with highest levels found in stamens. Found in the root cap, in guard cells and in mesophyll cells.

The protein resides in the plastid. Its subcellular location is the chloroplast membrane. The protein localises to the endoplasmic reticulum membrane. It is found in the peroxisome membrane. Its function is as follows. Glucose 6-phosphate (Glc6P) transporter. Also transports inorganic phosphate, 3-phosphoglycerate, triose phosphates and, to a leser extent, phosphoenolpyruvate. Responsible for the transport of Glc6P into plastids of heterotrophic tissues where it can be used as a carbon source for starch biosynthesis, as substrate for fatty acid biosynthesis or as substrate for NADPH generation via the oxidative pentose phosphate pathway (OPPP). Required for pollen maturation and embryo sac development. Preferentially exchanges Glc6P for ribulose-5-phosphate (Ru5P) in reconstituted yeast proteoliposomes. May supply the substrate (Glc6P) for OPPP reactions inside peroxisomes and exchange it with the product Ru5P which leaves the organelle. This chain is Glucose-6-phosphate/phosphate translocator 1, chloroplastic, found in Arabidopsis thaliana (Mouse-ear cress).